The chain runs to 404 residues: Latent membrane protein 1 (404 aa).

Residues 1–23 (MERDLESAPPSAPRPPLGPPLSS) are Cytoplasmic-facing. Residues 24 to 44 (SIGLALLLLLLALLFWLYIVM) form a helical membrane-spanning segment. Over 45 to 51 (SDWTGGA) the chain is Extracellular. A helical transmembrane segment spans residues 52-72 (LLVLYSFALMLIIIILIIFIF). The Cytoplasmic segment spans residues 73 to 75 (RRD). A helical transmembrane segment spans residues 76–96 (LLCPLGGLGLLLLMITLLLIA). Topologically, residues 97–106 (LWNLHGQALY) are extracellular. The helical transmembrane segment at 107–127 (LGIVLFIFGCLLVFGIWIYFL) threads the bilayer. Topologically, residues 128–139 (EILWRLGATLWQ) are cytoplasmic. Residues 140–160 (LLAFILAFFLAIILLIIALYL) form a helical membrane-spanning segment. Over 161–163 (QQN) the chain is Extracellular. A helical transmembrane segment spans residues 164 to 184 (WWTLLVDLLWLLLFMAILIWM). The Cytoplasmic portion of the chain corresponds to 185–404 (YYHGPRHTDE…HGPVQLSYYD (220 aa)). A CTAR1 region spans residues 194-232 (EHHHDDSLPHPQQATDDSSHESDSNSNEGRHHLLVSGAG). The tract at residues 194 to 404 (EHHHDDSLPH…HGPVQLSYYD (211 aa)) is disordered. Residues 204–208 (PQQAT) carry the Interaction with host TRAF proteins motif. A compositionally biased stretch (basic and acidic residues) spans 210–224 (DSSHESDSNSNEGRH). Low complexity-rich tracts occupy residues 251–322 (NGPQ…PQDP) and 375–384 (PHLPTLLLGT). Residues 370-404 (GGGGDPHLPTLLLGTSGSGGDDDDPHGPVQLSYYD) are CTAR2.

It belongs to the herpesviridae LMP-1 family. In terms of assembly, interacts (via PXQXT motif) with host tumor necrosis factor receptor-associated factor (TRAF) proteins TRAF1, TRAF2, TRAF3 and TRAF5. Interacts with human protein ZMYND11; leading to negatively regulate NF-kappa-B activation. Interacts with host UBE2I; this interaction induces the sumoylation of various cellular proteins. Interacts with host IRF7. Interacts with host TYK2. Post-translationally, ubiquitinated on the N-terminus.

The protein localises to the host cell membrane. Functionally, acts as a CD40 functional homolog to prevent apoptosis of infected B-lymphocytes and drive their proliferation. Functions as a constitutively active tumor necrosis factor receptor that induces the activation of several signaling pathways, including those of the NF-kappa-B family. LMP1 signaling leads to up-regulation of antiapoptotic proteins and provide growth signals in latently infected cells. Interacts with host UBE2I and subsequently affects the sumoylation state of several cellular proteins. For example, induces the sumoylation of host IRF7 thereby limiting its transcriptional activity and modulating the activation of innate immune responses. Also inhibits host IFN-alpha-stimulated STAT2 nuclear translocation and interferon-stimulated response element transcriptional activity by interacting with and inhibiting host TYK2. Induces SUMO expression during viral latency thereby dysregulating the host sumoylation processes. This chain is Latent membrane protein 1 (LMP1), found in Homo sapiens (Human).